A 207-amino-acid chain; its full sequence is 2,3-bisphosphoglycerate-dependent phosphoglycerate mutase (207 aa).

Residues 10–17 (RHGQSEWN), 23–24 (TG), Arg-62, 89–92 (ERDY), Lys-100, 116–117 (RR), and 160–161 (GN) contribute to the substrate site. Residue His-11 is the Tele-phosphohistidine intermediate of the active site. The active-site Proton donor/acceptor is the Glu-89.

This sequence belongs to the phosphoglycerate mutase family. BPG-dependent PGAM subfamily. In terms of assembly, homodimer.

The enzyme catalyses (2R)-2-phosphoglycerate = (2R)-3-phosphoglycerate. The protein operates within carbohydrate degradation; glycolysis; pyruvate from D-glyceraldehyde 3-phosphate: step 3/5. Its function is as follows. Catalyzes the interconversion of 2-phosphoglycerate and 3-phosphoglycerate. The protein is 2,3-bisphosphoglycerate-dependent phosphoglycerate mutase of Nitrobacter winogradskyi (strain ATCC 25391 / DSM 10237 / CIP 104748 / NCIMB 11846 / Nb-255).